The following is a 128-amino-acid chain: uncharacterized protein (128 aa).

High expression in pituitary gland and weak in pancreas.

This is an uncharacterized protein from Homo sapiens (Human).